Reading from the N-terminus, the 388-residue chain is Pepsin A-4 (388 aa).

The first 15 residues, 1-15 (MKWLLLLGLVALSEC), serve as a signal peptide directing secretion. A propeptide spans 16–62 (IMYKVPLIRKKSLRRTLSERGLLKDFLKKHNLNPARKYFPQWEAPTL) (activation peptide). The 310-residue stretch at 76–385 (YFGTIGIGTP…DRANNQVGLA (310 aa)) folds into the Peptidase A1 domain. Residue Asp-94 is part of the active site. A disulfide bridge connects residues Cys-107 and Cys-112. Ser-130 is subject to Phosphoserine. A disulfide bridge links Cys-268 with Cys-272. Asp-277 is a catalytic residue. Cys-311 and Cys-344 are joined by a disulfide.

It belongs to the peptidase A1 family.

The protein resides in the secreted. It catalyses the reaction Preferential cleavage: hydrophobic, preferably aromatic, residues in P1 and P1' positions. Cleaves 1-Phe-|-Val-2, 4-Gln-|-His-5, 13-Glu-|-Ala-14, 14-Ala-|-Leu-15, 15-Leu-|-Tyr-16, 16-Tyr-|-Leu-17, 23-Gly-|-Phe-24, 24-Phe-|-Phe-25 and 25-Phe-|-Tyr-26 bonds in the B chain of insulin.. Functionally, shows particularly broad specificity; although bonds involving phenylalanine and leucine are preferred, many others are also cleaved to some extent. The chain is Pepsin A-4 (PGA4) from Homo sapiens (Human).